Consider the following 190-residue polypeptide: Large ribosomal subunit protein bL9 (190 aa).

This sequence belongs to the bacterial ribosomal protein bL9 family.

Its function is as follows. Binds to the 23S rRNA. This Rhodobacter capsulatus (strain ATCC BAA-309 / NBRC 16581 / SB1003) protein is Large ribosomal subunit protein bL9.